The chain runs to 994 residues: Seizure protein 6 homolog (994 aa).

Positions 1–19 (MRPVALLLLPSLLALLAHG) are cleaved as a signal peptide. Residues 20-925 (LSLEAPTVGK…AASSTLDAAH (906 aa)) are Extracellular-facing. The tract at residues 28-50 (GKGQAPGIEETDGELTAAPTPEQ) is disordered. O-glycosylated at two sites regions lie at residues 38-47 (TDGELTAAPT) and 59-63 (TTAPT). Disordered regions lie at residues 88-146 (LRPA…ESES), 171-191 (IASTTPPSRAWTPTQEGPGDM), and 241-261 (PGPCSWNFSGPEGSLDSPTDL). A compositionally biased stretch (pro residues) spans 93 to 107 (PFQPDPPAPFTPSPL). Composition is skewed to polar residues over residues 112 to 123 (NQDSRPVFTSPT) and 172 to 185 (ASTTPPSRAWTPTQ). Asparagine 289 carries an N-linked (GlcNAc...) asparagine glycan. One can recognise a Sushi 1 domain in the interval 355–414 (LSCHFPRRPAYGDVTVTSLHPGGSARFHCATGYQLKGARHLTCLNATQPFWDSKEPVCIA). Cystine bridges form between cysteine 357-cysteine 397, cysteine 383-cysteine 412, cysteine 416-cysteine 443, cysteine 532-cysteine 574, cysteine 559-cysteine 589, cysteine 593-cysteine 619, cysteine 710-cysteine 752, cysteine 738-cysteine 765, cysteine 771-cysteine 813, cysteine 799-cysteine 830, cysteine 838-cysteine 880, and cysteine 866-cysteine 895. 3 N-linked (GlcNAc...) asparagine glycosylation sites follow: asparagine 399, asparagine 436, and asparagine 541. Residues 416 to 527 (CGGVIRNATT…AGMALRYEAF (112 aa)) enclose the CUB 1 domain. The Sushi 2 domain occupies 530 to 591 (GHCYEPFVKY…WNETEPACRA (62 aa)). Positions 593-704 (CSGEITDSAG…QGFVIHFFEV (112 aa)) constitute a CUB 2 domain. 3 Sushi domains span residues 708–767 (DTCP…SCQR), 769–832 (TSCH…KCLL), and 836–897 (KPCH…ICRA). Residues 926–946 (IAAAIFLPLVAMVLLVGGVYF) form a helical membrane-spanning segment. Residues 947–994 (YFSRLQGKSSLQLPRPRPRPYNRITIESAFDNPTYETGSLSFAGDERI) lie on the Cytoplasmic side of the membrane.

This sequence belongs to the SEZ6 family. In terms of processing, glycosylated.

The protein resides in the cell membrane. In terms of biological role, may play a role in cell-cell recognition and in neuronal membrane signaling. Seems to be important for the achievement of the necessary balance between dendrite elongation and branching during the elaboration of a complex dendritic arbor. Involved in the development of appropriate excitatory synaptic connectivity. This Homo sapiens (Human) protein is Seizure protein 6 homolog (SEZ6).